We begin with the raw amino-acid sequence, 172 residues long: Protein GrpE (172 aa).

The segment at 1–23 (MNQDHPECDSEELTQNSPETDPL) is disordered.

Belongs to the GrpE family. As to quaternary structure, homodimer.

It is found in the cytoplasm. Functionally, participates actively in the response to hyperosmotic and heat shock by preventing the aggregation of stress-denatured proteins, in association with DnaK and GrpE. It is the nucleotide exchange factor for DnaK and may function as a thermosensor. Unfolded proteins bind initially to DnaJ; upon interaction with the DnaJ-bound protein, DnaK hydrolyzes its bound ATP, resulting in the formation of a stable complex. GrpE releases ADP from DnaK; ATP binding to DnaK triggers the release of the substrate protein, thus completing the reaction cycle. Several rounds of ATP-dependent interactions between DnaJ, DnaK and GrpE are required for fully efficient folding. The chain is Protein GrpE from Xylella fastidiosa (strain M23).